We begin with the raw amino-acid sequence, 525 residues long: GMP synthase [glutamine-hydrolyzing] (525 aa).

The 200-residue stretch at 8–207 (KILILDFGSQ…ALEICGCPAN (200 aa)) folds into the Glutamine amidotransferase type-1 domain. Residue C85 is the Nucleophile of the active site. Residues H181 and E183 contribute to the active site. In terms of domain architecture, GMPS ATP-PPase spans 208–400 (WKPSSIIEDA…LGLPYDMLYR (193 aa)). Position 235 to 241 (235 to 241 (SGGVDSS)) interacts with ATP.

As to quaternary structure, homodimer.

The enzyme catalyses XMP + L-glutamine + ATP + H2O = GMP + L-glutamate + AMP + diphosphate + 2 H(+). It functions in the pathway purine metabolism; GMP biosynthesis; GMP from XMP (L-Gln route): step 1/1. Its function is as follows. Catalyzes the synthesis of GMP from XMP. This chain is GMP synthase [glutamine-hydrolyzing], found in Shewanella pealeana (strain ATCC 700345 / ANG-SQ1).